The primary structure comprises 296 residues: Cytidine deaminase (296 aa).

CMP/dCMP-type deaminase domains lie at 47–167 (TEAE…FGPK) and 186–296 (DSAD…IDPV). 88–90 (NLE) is a substrate binding site. His101 lines the Zn(2+) pocket. Residue Glu103 is the Proton donor of the active site. Residues Cys128 and Cys131 each coordinate Zn(2+).

It belongs to the cytidine and deoxycytidylate deaminase family. As to quaternary structure, homodimer. Requires Zn(2+) as cofactor.

It carries out the reaction cytidine + H2O + H(+) = uridine + NH4(+). The enzyme catalyses 2'-deoxycytidine + H2O + H(+) = 2'-deoxyuridine + NH4(+). This enzyme scavenges exogenous and endogenous cytidine and 2'-deoxycytidine for UMP synthesis. This chain is Cytidine deaminase, found in Shewanella baltica (strain OS155 / ATCC BAA-1091).